The chain runs to 257 residues: tRNA uridine(34) hydroxylase (257 aa).

One can recognise a Rhodanese domain in the interval 128–222 (NGRRLVMLDA…YFEQVGGEGY (95 aa)). The Cysteine persulfide intermediate role is filled by Cys182.

This sequence belongs to the TrhO family.

It catalyses the reaction uridine(34) in tRNA + AH2 + O2 = 5-hydroxyuridine(34) in tRNA + A + H2O. Its function is as follows. Catalyzes oxygen-dependent 5-hydroxyuridine (ho5U) modification at position 34 in tRNAs. This chain is tRNA uridine(34) hydroxylase, found in Xylella fastidiosa (strain 9a5c).